Reading from the N-terminus, the 327-residue chain is Serine/threonine-protein phosphatase PP1-1 (327 aa).

The Mn(2+) site is built by Asp-63, His-65, Asp-91, and Asn-123. Residue His-124 is the Proton donor of the active site. Mn(2+) contacts are provided by His-172 and His-247. The tract at residues 305–327 is disordered; the sequence is GYQGSSQNWHMTPPRKNKTGNSK. Thr-316 bears the Phosphothreonine; by CDC2 mark. Residues 317–327 are compositionally biased toward basic residues; the sequence is PPRKNKTGNSK.

This sequence belongs to the PPP phosphatase family. PP-1 subfamily. In terms of assembly, oligomer. The cofactor is Mn(2+).

It localises to the nucleus. The enzyme catalyses O-phospho-L-seryl-[protein] + H2O = L-seryl-[protein] + phosphate. It catalyses the reaction O-phospho-L-threonyl-[protein] + H2O = L-threonyl-[protein] + phosphate. Its function is as follows. Essential role in cell cycle control. PP1 is perhaps required for exit from mitosis. In Schizosaccharomyces pombe (strain 972 / ATCC 24843) (Fission yeast), this protein is Serine/threonine-protein phosphatase PP1-1 (dis2).